The primary structure comprises 212 residues: Ribosomal RNA small subunit methyltransferase G (212 aa).

S-adenosyl-L-methionine-binding positions include Gly-80, Leu-85, 131-132, and Arg-146; that span reads AE.

It belongs to the methyltransferase superfamily. RNA methyltransferase RsmG family.

The protein resides in the cytoplasm. The enzyme catalyses guanosine(527) in 16S rRNA + S-adenosyl-L-methionine = N(7)-methylguanosine(527) in 16S rRNA + S-adenosyl-L-homocysteine. Specifically methylates the N7 position of guanine in position 527 of 16S rRNA. The chain is Ribosomal RNA small subunit methyltransferase G from Xanthomonas axonopodis pv. citri (strain 306).